Consider the following 593-residue polypeptide: Probable E3 ubiquitin-protein ligase ARI2 (593 aa).

Residues 120–334 (SMMSCDICVE…ISGHSCGRFQ (215 aa)) form a TRIAD supradomain region. Positions 124, 127, 141, 143, 146, 149, 168, 173, 215, 221, 237, 239, 244, 247, 252, 257, 284, and 287 each coordinate Zn(2+). The segment at 124–173 (CDICVEDVPGYQLTRMDCGHSFCNNCWTGHFTVKINEGQSKRIICMAHKC) adopts an RING-type 1 zinc-finger fold. The IBR-type zinc-finger motif lies at 195–257 (EKFDRFLLES…SSQAHSPCSC (63 aa)). The RING-type 2; atypical zinc finger occupies 284 to 312 (CPKCHKPVEKNGGCNLVTCLCRQSFCWLC). The active site involves Cys-297. Cys-302, Cys-304, Cys-309, Cys-312, His-320, and Cys-330 together coordinate Zn(2+).

The protein belongs to the RBR family. Ariadne subfamily. The cofactor is Zn(2+). In terms of tissue distribution, ubiquitous.

It carries out the reaction [E2 ubiquitin-conjugating enzyme]-S-ubiquitinyl-L-cysteine + [acceptor protein]-L-lysine = [E2 ubiquitin-conjugating enzyme]-L-cysteine + [acceptor protein]-N(6)-ubiquitinyl-L-lysine.. It functions in the pathway protein modification; protein ubiquitination. Might act as an E3 ubiquitin-protein ligase, or as part of E3 complex, which accepts ubiquitin from specific E2 ubiquitin-conjugating enzymes and then transfers it to substrates. The chain is Probable E3 ubiquitin-protein ligase ARI2 (ARI2) from Arabidopsis thaliana (Mouse-ear cress).